We begin with the raw amino-acid sequence, 470 residues long: Argininosuccinate lyase (470 aa).

The protein belongs to the lyase 1 family. Argininosuccinate lyase subfamily.

Its subcellular location is the cytoplasm. It carries out the reaction 2-(N(omega)-L-arginino)succinate = fumarate + L-arginine. It participates in amino-acid biosynthesis; L-arginine biosynthesis; L-arginine from L-ornithine and carbamoyl phosphate: step 3/3. This chain is Argininosuccinate lyase, found in Mycobacterium tuberculosis (strain CDC 1551 / Oshkosh).